Reading from the N-terminus, the 305-residue chain is Peroxisome biogenesis factor 2 (305 aa).

Residues 1–15 (MAAREESTQSANRVL) lie on the Peroxisomal matrix side of the membrane. The chain crosses the membrane as a helical span at residues 16-42 (RISQLDALELNKALEQLVWSQFTQCFH). Over 43 to 48 (GFKPGL) the chain is Cytoplasmic. The helical transmembrane segment at 49–74 (LARFEPEVKAFLWLFLWRFTIYSKNA) threads the bilayer. At 75–98 (TVGQSVLNIQHKNDSSPNPVYQPP) the chain is on the peroxisomal matrix side. The chain crosses the membrane as a helical span at residues 99 to 125 (SKNQKLLYAVCTIGGRWLEERCYDLFR). Residues 126 to 133 (NRHLASFG) lie on the Cytoplasmic side of the membrane. The helical transmembrane segment at 134-160 (KAKQCMNFVVGLLKLGELMNFLIFLQK) threads the bilayer. Over 161 to 187 (GKFATLTERLLGIHSVFCKPQNMREVG) the chain is Peroxisomal matrix. Residues 188–211 (FEYMNRELLWHGFAEFLIFLLPLI) traverse the membrane as a helical segment. Topologically, residues 212 to 305 (NIQKLKAKLS…GIQMSEVNAL (94 aa)) are cytoplasmic. Positions 244, 247, 259, 261, 264, 267, 280, and 283 each coordinate Zn(2+). An RING-type zinc finger spans residues 244 to 284 (CALCGEWPTMPHTIGCEHVFCYYCVKSSFLFDIYFTCPKCG).

The protein belongs to the pex2/pex10/pex12 family. As to quaternary structure, component of the PEX2-PEX10-PEX12 retrotranslocation channel, composed of PEX2, PEX10 and PEX12. Forms intramolecular and intermolecular disulfide bonds in response to reactive oxygen species (ROS), promoting higher stability.

It is found in the peroxisome membrane. The catalysed reaction is [E2 ubiquitin-conjugating enzyme]-S-ubiquitinyl-L-cysteine + [acceptor protein]-L-cysteine = [E2 ubiquitin-conjugating enzyme]-L-cysteine + [acceptor protein]-S-ubiquitinyl-L-cysteine.. The enzyme catalyses S-ubiquitinyl-[E2 ubiquitin-conjugating enzyme]-L-cysteine + [acceptor protein]-L-lysine = [E2 ubiquitin-conjugating enzyme]-L-cysteine + N(6)-ubiquitinyl-[acceptor protein]-L-lysine.. The protein operates within protein modification; protein ubiquitination. Its function is as follows. E3 ubiquitin-protein ligase component of a retrotranslocation channel required for peroxisome organization by mediating export of the PEX5 receptor from peroxisomes to the cytosol, thereby promoting PEX5 recycling. The retrotranslocation channel is composed of PEX2, PEX10 and PEX12; each subunit contributing transmembrane segments that coassemble into an open channel that specifically allows the passage of PEX5 through the peroxisomal membrane. PEX2 also regulates peroxisome organization by acting as a E3 ubiquitin-protein ligase. PEX2 ubiquitinates PEX5 during its passage through the retrotranslocation channel: catalyzes monoubiquitination of PEX5 at 'Cys-11', a modification that acts as a signal for PEX5 extraction into the cytosol. Required for pexophagy in response to starvation by mediating ubiquitination of peroxisomal proteins, such as PEX5 and ABCD3/PMP70. Also involved in the response to reactive oxygen species (ROS) by mediating 'Lys-48'-linked polyubiquitination and subsequent degradation of PNPLA2/ATGL, thereby regulating lipolysis. The chain is Peroxisome biogenesis factor 2 from Mus musculus (Mouse).